We begin with the raw amino-acid sequence, 128 residues long: Phosphoribosyl-AMP cyclohydrolase (128 aa).

Aspartate 89 is a Mg(2+) binding site. A Zn(2+)-binding site is contributed by cysteine 90. Positions 91 and 93 each coordinate Mg(2+). The Zn(2+) site is built by cysteine 106 and cysteine 113.

It belongs to the PRA-CH family. In terms of assembly, homodimer. Requires Mg(2+) as cofactor. It depends on Zn(2+) as a cofactor.

It is found in the cytoplasm. The catalysed reaction is 1-(5-phospho-beta-D-ribosyl)-5'-AMP + H2O = 1-(5-phospho-beta-D-ribosyl)-5-[(5-phospho-beta-D-ribosylamino)methylideneamino]imidazole-4-carboxamide. It functions in the pathway amino-acid biosynthesis; L-histidine biosynthesis; L-histidine from 5-phospho-alpha-D-ribose 1-diphosphate: step 3/9. Its function is as follows. Catalyzes the hydrolysis of the adenine ring of phosphoribosyl-AMP. The sequence is that of Phosphoribosyl-AMP cyclohydrolase from Pyrobaculum calidifontis (strain DSM 21063 / JCM 11548 / VA1).